Consider the following 573-residue polypeptide: Putative cytochrome c oxidase subunit 1-beta (573 aa).

A helical transmembrane segment spans residues 53–73 (VIGHLYLATSFGFFLLGGVLA). Position 100 (histidine 100) interacts with Fe(II)-heme a. 6 helical membrane passes run 103 to 123 (IMMLLFATPLFAGFTNVIMPL), 141 to 161 (WMYLFGGLMVVSGFLTPGGAA), 188 to 208 (GLVVSGVSTTLSAVNFISTII), 227 to 247 (ILFTSILVLPAFPVLTAALLM), 272 to 292 (LFWFFGHPEVYIVALPFFGIV), and 304 to 324 (IFGYVSLVGATIAITFLSAVV). Residues histidine 278 and tyrosine 282 each contribute to the Cu cation site. Residues 278–282 (HPEVY) constitute a cross-link (1'-histidyl-3'-tyrosine (His-Tyr)). Cu cation contacts are provided by histidine 327 and histidine 328. Helical transmembrane passes span 329–349 (MFATGAVLLPFFSLMSFLIAV) and 373–393 (MLWACGFLVTFLLGGMSGVLI). Histidine 411 is a binding site for heme a3. The next 3 membrane-spanning stretches (helical) occupy residues 412-432 (LHYVLFGTVVFAMFAGFYFWW), 447-467 (IHFWTLFVGFQTTFLVQHWLG), and 490-510 (ISSIGAFLLGLSTLPFLYNVW). Histidine 413 contacts Fe(II)-heme a.

This sequence belongs to the heme-copper respiratory oxidase family. Associates with subunits II, III and IV to form cytochrome c oxidase. Requires Cu(2+) as cofactor. Heme serves as cofactor.

The protein resides in the cell membrane. The catalysed reaction is 4 Fe(II)-[cytochrome c] + O2 + 8 H(+)(in) = 4 Fe(III)-[cytochrome c] + 2 H2O + 4 H(+)(out). It participates in energy metabolism; oxidative phosphorylation. In terms of biological role, cytochrome c oxidase is the component of the respiratory chain that catalyzes the reduction of oxygen to water. Subunits 1-3 form the functional core of the enzyme complex. CO I is the catalytic subunit of the enzyme. Electrons originating in cytochrome c are transferred via the copper A center of subunit 2 and heme A of subunit 1 to the bimetallic center formed by heme A3 and copper B. This chain is Putative cytochrome c oxidase subunit 1-beta (ctaD2), found in Streptomyces coelicolor (strain ATCC BAA-471 / A3(2) / M145).